Reading from the N-terminus, the 70-residue chain is MPRKIEEIKDFLLTARRKDAKSVKIKKNKDNVKFKVRCSRYLYTLVITDKEKAEKLKQSLPPGLAVKEPK.

A Glycyl lysine isopeptide (Lys-Gly) (interchain with G-Cter in SUMO2) cross-link involves residue lysine 4. The residue at position 9 (lysine 9) is an N6-acetyllysine; alternate. Residue lysine 9 forms a Glycyl lysine isopeptide (Lys-Gly) (interchain with G-Cter in SUMO2); alternate linkage. Position 67 is an N6-acetyllysine (lysine 67).

Belongs to the eukaryotic ribosomal protein eL38 family. Component of the large ribosomal subunit.

The protein resides in the cytoplasm. In terms of biological role, component of the large ribosomal subunit. The ribosome is a large ribonucleoprotein complex responsible for the synthesis of proteins in the cell. The sequence is that of Large ribosomal subunit protein eL38 (RPL38) from Macaca fascicularis (Crab-eating macaque).